Reading from the N-terminus, the 332-residue chain is UDP-galactose/UDP-glucose transporter 1 (332 aa).

8 consecutive transmembrane segments (helical) span residues 11–31 (ILLL…QGVL), 49–69 (HLAF…YIMI), 80–100 (APWW…AMGI), 112–132 (VLAK…VYGI), 135–155 (TFPE…FALL), 206–226 (IMLG…FGLP), 252–272 (ICGA…GSLA), and 301–317 (WGCV…QIYL). The Di-lysine motif motif lies at 327–332 (KKKQKS).

Belongs to the nucleotide-sugar transporter family. UDP-galactose:UMP antiporter (TC 2.A.7.11) subfamily.

It localises to the endoplasmic reticulum membrane. Its function is as follows. Essential sugar transporter required for the transport of UDP-galactose and UDP-glucose from the cytoplasm into the Golgi and the endoplasmic reticulum, to ensure quality control of protein folding. Essential for pollen development and involved in embryo sac progress. The chain is UDP-galactose/UDP-glucose transporter 1 from Arabidopsis thaliana (Mouse-ear cress).